The following is a 177-amino-acid chain: Large ribosomal subunit protein uL6 (177 aa).

The protein belongs to the universal ribosomal protein uL6 family. Part of the 50S ribosomal subunit.

Functionally, this protein binds to the 23S rRNA, and is important in its secondary structure. It is located near the subunit interface in the base of the L7/L12 stalk, and near the tRNA binding site of the peptidyltransferase center. The protein is Large ribosomal subunit protein uL6 of Acidovorax ebreus (strain TPSY) (Diaphorobacter sp. (strain TPSY)).